The chain runs to 1886 residues: Nuclear pore membrane glycoprotein 210 (1886 aa).

The first 25 residues, 1-25, serve as a signal peptide directing secretion; sequence MARASLIQPGLWALLLLQAVGPAVA. Residues 26–1805 are Perinuclear space-facing; that stretch reads AKLNIPKVLL…GASLLSHFLD (1780 aa). N-linked (GlcNAc...) asparagine glycans are attached at residues Asn-337, Asn-484, Asn-681, and Asn-1039. Residues 1078–1151 enclose the BIG2 domain; that stretch reads FPPFRLIPRK…VQAVDAETGK (74 aa). A helical membrane pass occupies residues 1806–1828; that stretch reads SYQVMFFTFFALLAGTAVTIIAY. Over 1829–1886 the chain is Cytoplasmic; the sequence is HTVCAPRELASPLALTPHASPQHSPHYLASSPTAFNTLPSDRKASPPSGLWSPAYASH. Ser-1839 carries the phosphoserine modification. Residue Thr-1844 is modified to Phosphothreonine. The disordered stretch occupies residues 1866–1886; the sequence is LPSDRKASPPSGLWSPAYASH. 4 positions are modified to phosphoserine: Ser-1873, Ser-1876, Ser-1880, and Ser-1885.

Belongs to the NUP210 family. In terms of assembly, forms dimers and possibly higher-order oligomers. Post-translationally, N-glycosylated, but not all potential glycosylation sites may be used. Contains high-mannose type oligosaccharides. In terms of processing, phosphorylated at Ser-1880 in mitosis specifically; not phosphorylated in interphase.

The protein localises to the nucleus. It localises to the nuclear pore complex. The protein resides in the nucleus membrane. Its subcellular location is the endoplasmic reticulum membrane. Nucleoporin essential for nuclear pore assembly and fusion, nuclear pore spacing, as well as structural integrity. In Rattus norvegicus (Rat), this protein is Nuclear pore membrane glycoprotein 210 (Nup210).